We begin with the raw amino-acid sequence, 477 residues long: UDP-sulfoquinovose synthase, chloroplastic (477 aa).

Residues 1–21 (MAHLLSASCPSVISLSSSSSK) form a disordered region. Residues 1–86 (MAHLLSASCP…TNNSSSKPKR (86 aa)) constitute a chloroplast transit peptide. NAD(+) contacts are provided by residues 95–96 (YC), 115–119 (DNLVR), 158–159 (DI), R184, and N202. Residue R184 participates in substrate binding. Substrate contacts are provided by T228 and Y265. T228 is an active-site residue. Residues Y265 and K269 each contribute to the NAD(+) site. Y265 (proton acceptor) is an active-site residue. Residue K269 is part of the active site. Residue Q292 coordinates substrate. V295 contributes to the NAD(+) binding site. Substrate-binding positions include 322–325 (ALNR), 337–339 (TVY), and 410–412 (RVE).

Belongs to the NAD(P)-dependent epimerase/dehydratase family. In terms of assembly, homodimer. NAD(+) serves as cofactor.

It is found in the plastid. The protein localises to the chloroplast. The enzyme catalyses sulfite + UDP-alpha-D-glucose + H(+) = UDP-alpha-D-6-sulfoquinovose + H2O. Concentrations above 100 uM sulfite inhibit the reaction. Its function is as follows. Involved in the biosynthesis of sulfolipids found in thylakoid membranes. Converts UDP-glucose and sulfite to the sulfolipid head group precursor UDP-sulfoquinovose. The polypeptide is UDP-sulfoquinovose synthase, chloroplastic (SQD1) (Arabidopsis thaliana (Mouse-ear cress)).